The chain runs to 151 residues: Ubiquitin-like protein 4A-B (151 aa).

The 76-residue stretch at 1-76 (MILTIKPLQG…LNLVVRPAGE (76 aa)) folds into the Ubiquitin-like domain.

As to quaternary structure, component of the BAT3 complex.

It localises to the cytoplasm. Its subcellular location is the cytosol. Functionally, component of the BAT3 complex, a multiprotein complex involved in the post-translational delivery of tail-anchored (TA) membrane proteins to the endoplasmic reticulum membrane. TA membrane proteins, also named type II transmembrane proteins, contain a single C-terminal transmembrane region. This is Ubiquitin-like protein 4A-B (ubl4ab) from Salmo salar (Atlantic salmon).